The chain runs to 409 residues: MFRTCTKIGTVPKVLVNQKGLIDGLRRVTTDATTSRANPAHVPEEHDKPFPVKLDDSVFEGYKIDVPSTEIEVTKGELLGLYEKMVTIRRLELACDALYKAKKIRGFCHLSIGQEAVAAGIEGAITLDDSIITSYRCHGFAYTRGLSIRSIIGELMGRQCGASKGKGGSMHIFAKNFYGGNGIVGAQIPLGAGIGFAQKYLEKPTTTFALYGDGASNQGQAFEAFNMAKLWGLPVIFACENNKYGMGTSAERSSAMTEFYKRGQYIPGLLVNGMDVLAVLQASKFAKKYTVENSQPLLMEFVTYRYGGHSMSDPGTTYRSREEVQKVRAARDPIEGLKKHIMEWGVANANELKNIEKRIRGMVDEEVRIAEESPFPDPIEESLFSDVYVAGTEPAYARGRNSLEYHQYK.

A Phosphothreonine modification is found at T6. Pyruvate is bound by residues H109, Y135, R136, A174, G182, V184, D213, G214, A215, N242, and Y244. Thiamine diphosphate is bound by residues Y135 and R136. Thiamine diphosphate is bound by residues G182, V184, D213, G214, A215, and N242. Residue D213 participates in Mg(2+) binding. Mg(2+) is bound by residues N242 and Y244. The residue at position 306 (Y306) is a Phosphotyrosine. Position 309 (H309) interacts with thiamine diphosphate. A phosphoserine mark is found at S310 and S312.

Tetramer of 2 alpha and 2 beta subunits. Thiamine diphosphate is required as a cofactor. Mg(2+) serves as cofactor.

It is found in the mitochondrion matrix. The catalysed reaction is N(6)-[(R)-lipoyl]-L-lysyl-[protein] + pyruvate + H(+) = N(6)-[(R)-S(8)-acetyldihydrolipoyl]-L-lysyl-[protein] + CO2. With respect to regulation, E1 activity is regulated by phosphorylation (inactivation) and dephosphorylation (activation) of the alpha subunit. In terms of biological role, the pyruvate dehydrogenase complex catalyzes the overall conversion of pyruvate to acetyl-CoA and CO(2). It contains multiple copies of three enzymatic components: pyruvate dehydrogenase (E1), dihydrolipoamide acetyltransferase (E2) and lipoamide dehydrogenase (E3). The protein is Pyruvate dehydrogenase E1 component subunit alpha, mitochondrial (pda1) of Schizosaccharomyces pombe (strain 972 / ATCC 24843) (Fission yeast).